A 263-amino-acid chain; its full sequence is Trans-2-decenoyl-[acyl-carrier-protein] isomerase (263 aa).

This sequence belongs to the enoyl-CoA hydratase/isomerase family. As to quaternary structure, homotetramer.

It catalyses the reaction (2E)-decenoyl-[ACP] = (3Z)-decenoyl-[ACP]. It functions in the pathway lipid metabolism; fatty acid biosynthesis. In terms of biological role, catalyzes the isomerization of trans-2-decenoyl-ACP to cis-3-decenoyl-ACP. Required for survival at low pH. This Streptococcus mutans serotype c (strain ATCC 700610 / UA159) protein is Trans-2-decenoyl-[acyl-carrier-protein] isomerase (fabM).